The primary structure comprises 114 residues: T cell receptor beta variable 5-4 (114 aa).

The signal sequence occupies residues 1 to 21 (MGPGLLCWALLCLLGAGSVET). In terms of domain architecture, Ig-like spans 22-114 (GVTQSPTHLI…SALYLCASSL (93 aa)). Cysteines 42 and 110 form a disulfide. Residue asparagine 90 is glycosylated (N-linked (GlcNAc...) asparagine).

In terms of assembly, alpha-beta TR is a heterodimer composed of an alpha and beta chain; disulfide-linked. The alpha-beta TR is associated with the transmembrane signaling CD3 coreceptor proteins to form the TR-CD3 (TcR or TCR). The assembly of alpha-beta TR heterodimers with CD3 occurs in the endoplasmic reticulum where a single alpha-beta TR heterodimer associates with one CD3D-CD3E heterodimer, one CD3G-CD3E heterodimer and one CD247 homodimer forming a stable octameric structure. CD3D-CD3E and CD3G-CD3E heterodimers preferentially associate with TR alpha and TR beta chains, respectively. The association of the CD247 homodimer is the last step of TcR assembly in the endoplasmic reticulum and is required for transport to the cell surface.

It is found in the cell membrane. V region of the variable domain of T cell receptor (TR) beta chain that participates in the antigen recognition. Alpha-beta T cell receptors are antigen specific receptors which are essential to the immune response and are present on the cell surface of T lymphocytes. Recognize peptide-major histocompatibility (MH) (pMH) complexes that are displayed by antigen presenting cells (APC), a prerequisite for efficient T cell adaptive immunity against pathogens. Binding of alpha-beta TR to pMH complex initiates TR-CD3 clustering on the cell surface and intracellular activation of LCK that phosphorylates the ITAM motifs of CD3G, CD3D, CD3E and CD247 enabling the recruitment of ZAP70. In turn ZAP70 phosphorylates LAT, which recruits numerous signaling molecules to form the LAT signalosome. The LAT signalosome propagates signal branching to three major signaling pathways, the calcium, the mitogen-activated protein kinase (MAPK) kinase and the nuclear factor NF-kappa-B (NF-kB) pathways, leading to the mobilization of transcription factors that are critical for gene expression and essential for T cell growth and differentiation. The T cell repertoire is generated in the thymus, by V-(D)-J rearrangement. This repertoire is then shaped by intrathymic selection events to generate a peripheral T cell pool of self-MH restricted, non-autoaggressive T cells. Post-thymic interaction of alpha-beta TR with the pMH complexes shapes TR structural and functional avidity. The protein is T cell receptor beta variable 5-4 of Homo sapiens (Human).